The sequence spans 141 residues: Putative pre-16S rRNA nuclease (141 aa).

It belongs to the YqgF nuclease family.

It is found in the cytoplasm. Its function is as follows. Could be a nuclease involved in processing of the 5'-end of pre-16S rRNA. The polypeptide is Putative pre-16S rRNA nuclease (Syntrophomonas wolfei subsp. wolfei (strain DSM 2245B / Goettingen)).